Consider the following 161-residue polypeptide: uncharacterized protein (161 aa).

Residues 1–16 (MPRAGRAPAEGGPAPG) are compositionally biased toward low complexity. Disordered regions lie at residues 1-23 (MPRA…SRCL), 50-91 (GRPV…TQSA), and 140-161 (RGPA…WRIS).

This is an uncharacterized protein from Homo sapiens (Human).